We begin with the raw amino-acid sequence, 570 residues long: High-affinity hexose transporter HXT6 (570 aa).

The Cytoplasmic segment spans residues 1–60 (MSQDAAIAEQTPVEHLSAVDSASHSVLSTPSNKAERDEIKAYGEGEEHEPVVEIPKRPAS). A helical transmembrane segment spans residues 61–81 (AYVTVSIMCIMIAFGGFVFGW). Over 82-116 (DTGTISGFINQTDFIRRFGMKHKDGTNYLSKVRTG) the chain is Extracellular. Residue Asn-91 is glycosylated (N-linked (GlcNAc...) asparagine). Residues 117–137 (LIVSIFNIGCAIGGIILSKLG) traverse the membrane as a helical segment. Topologically, residues 138–143 (DMYGRK) are cytoplasmic. The chain crosses the membrane as a helical span at residues 144–164 (VGLIVVVVIYIIGIIIQIASI). Residues 165–174 (NKWYQYFIGR) are Extracellular-facing. A helical transmembrane segment spans residues 175-195 (IISGLGVGGIAVLSPMLISEV). Topologically, residues 196–201 (SPKHLR) are cytoplasmic. The chain crosses the membrane as a helical span at residues 202 to 222 (GTLVSCYQLMITAGIFLGYCT). At 223-236 (NFGTKNYSNSVQWR) the chain is on the extracellular side. N-linked (GlcNAc...) asparagine glycosylation occurs at Asn-228. The chain crosses the membrane as a helical span at residues 237 to 257 (VPLGLCFAWALFMIGGMTFVP). The Cytoplasmic portion of the chain corresponds to 258 to 340 (ESPRYLAEVG…IQSLQQLTGD (83 aa)). Residues 341-357 (NYFFYYGTTIFKAVGLS) traverse the membrane as a helical segment. Residues 358–363 (DSFETS) lie on the Extracellular side of the membrane. Residues 364–381 (IVLGIVNFASTFVGIYVV) traverse the membrane as a helical segment. Residues 382–388 (ERYGRRT) are Cytoplasmic-facing. The chain crosses the membrane as a helical span at residues 389 to 409 (CLLWGAASMTACMVVYASVGV). Topologically, residues 410 to 431 (TRLWPNGQDQPSSKGAGNCMIV) are extracellular. A helical transmembrane segment spans residues 432-452 (FACFYIFCFATTWAPIPYVVV). Topologically, residues 453–469 (SETFPLRVKSKAMSIAT) are cytoplasmic. A helical membrane pass occupies residues 470–490 (AANWLWGFLIGFFTPFITGAI). Residue Asn-491 is a topological domain, extracellular. Residues 492 to 512 (FYYGYVFMGCLVFMFFYVLLV) form a helical membrane-spanning segment. At 513 to 570 (VPETKGLTLEEVNTMWEEGVLPWKSASWVPPSRRGANYDAEEMAHDDKPLYKRMFSTK) the chain is on the cytoplasmic side. Lys-560 is covalently cross-linked (Glycyl lysine isopeptide (Lys-Gly) (interchain with G-Cter in ubiquitin)).

This sequence belongs to the major facilitator superfamily. Sugar transporter (TC 2.A.1.1) family.

The protein resides in the membrane. Functionally, high-affinity glucose transporter. The chain is High-affinity hexose transporter HXT6 (HXT6) from Saccharomyces cerevisiae (strain ATCC 204508 / S288c) (Baker's yeast).